Here is a 135-residue protein sequence, read N- to C-terminus: MADITVVNDTGELYNVINQKKSEGYLESELTIISKSKLHLNDLHDSEISLISTSGTFSDRMTKLLTGEDGEHAVLSRYNLAPDELEKYKQLILDDKMLVVAVRDKSSHKEVQEHNSAYEEIDITHFAEASKGPKA.

It belongs to the UPF0355 family.

In Staphylococcus aureus (strain Mu50 / ATCC 700699), this protein is UPF0355 protein SAV0387.